Reading from the N-terminus, the 350-residue chain is UDP-glucose 4-epimerase 2 (350 aa).

Residues glycine 12–isoleucine 14, aspartate 33–asparagine 37, aspartate 63–leucine 64, phenylalanine 85, and lysine 89 contribute to the NAD(+) site. Residue serine 129–threonine 131 coordinates substrate. The active-site Proton acceptor is tyrosine 153. Positions 157 and 181 each coordinate NAD(+). Substrate contacts are provided by residues tyrosine 181–asparagine 183, asparagine 202–leucine 204, threonine 220–phenylalanine 222, arginine 235, and arginine 297–aspartate 300.

The protein belongs to the NAD(P)-dependent epimerase/dehydratase family. As to quaternary structure, forms homodimers and heterodimers. NAD(+) is required as a cofactor. As to expression, widely expressed. Most highly expressed in stems and flowers.

It localises to the cytoplasm. It carries out the reaction UDP-alpha-D-glucose = UDP-alpha-D-galactose. Its pathway is carbohydrate metabolism; galactose metabolism. Enhanced activity by NaCl. Enhanced activity by NAD(+). Strongly inhibited by UDP. Functionally, catalyzes the interconversion between UDP-glucose and UDP-galactose. Cooperates with UGE3 in pollen development and with UGE4 in cell wall carbohydrate biosynthesis and growth. This Arabidopsis thaliana (Mouse-ear cress) protein is UDP-glucose 4-epimerase 2.